The primary structure comprises 360 residues: Phospho-N-acetylmuramoyl-pentapeptide-transferase (360 aa).

Helical transmembrane passes span 25 to 45, 73 to 93, 97 to 117, 128 to 148, 168 to 188, 199 to 219, 236 to 256, 262 to 282, 288 to 308, and 338 to 358; these read RAIL…PTLI, TMGG…WADL, YVWV…VDDY, LIAK…AVYL, VMPQ…VGTS, GLAI…AYVS, TAEL…FLWF, LVFM…IIAI, LVLF…MLQV, and VIVR…ATLK.

The protein belongs to the glycosyltransferase 4 family. MraY subfamily. Requires Mg(2+) as cofactor.

The protein resides in the cell inner membrane. It carries out the reaction UDP-N-acetyl-alpha-D-muramoyl-L-alanyl-gamma-D-glutamyl-meso-2,6-diaminopimeloyl-D-alanyl-D-alanine + di-trans,octa-cis-undecaprenyl phosphate = di-trans,octa-cis-undecaprenyl diphospho-N-acetyl-alpha-D-muramoyl-L-alanyl-D-glutamyl-meso-2,6-diaminopimeloyl-D-alanyl-D-alanine + UMP. It participates in cell wall biogenesis; peptidoglycan biosynthesis. Its function is as follows. Catalyzes the initial step of the lipid cycle reactions in the biosynthesis of the cell wall peptidoglycan: transfers peptidoglycan precursor phospho-MurNAc-pentapeptide from UDP-MurNAc-pentapeptide onto the lipid carrier undecaprenyl phosphate, yielding undecaprenyl-pyrophosphoryl-MurNAc-pentapeptide, known as lipid I. This Idiomarina loihiensis (strain ATCC BAA-735 / DSM 15497 / L2-TR) protein is Phospho-N-acetylmuramoyl-pentapeptide-transferase.